The following is a 143-amino-acid chain: Small ribosomal subunit protein uS9 (143 aa).

Ser2 is modified (N-acetylserine). The disordered stretch occupies residues 123 to 143 (MPEPKKFGGKGARSRYQKSYR). Positions 134–143 (ARSRYQKSYR) are enriched in basic residues.

The protein belongs to the universal ribosomal protein uS9 family.

This chain is Small ribosomal subunit protein uS9 (RPS16), found in Maudiozyma exigua (Yeast).